A 409-amino-acid chain; its full sequence is Arginine deiminase (409 aa).

Cys399 acts as the Amidino-cysteine intermediate in catalysis.

Belongs to the arginine deiminase family.

The protein localises to the cytoplasm. The catalysed reaction is L-arginine + H2O = L-citrulline + NH4(+). It functions in the pathway amino-acid degradation; L-arginine degradation via ADI pathway; carbamoyl phosphate from L-arginine: step 1/2. The chain is Arginine deiminase (arcA) from Latilactobacillus sakei (Lactobacillus sakei).